A 328-amino-acid polypeptide reads, in one-letter code: Endochitinase (328 aa).

A signal peptide spans 1-27 (MKKNRMMMMIWSVGVVWMLLLVGGSYG). The 41-residue stretch at 28–68 (EQCGRQAGGALCPGGNCCSQFGWCGSTTDYCGPGCQSQCGG) folds into the Chitin-binding type-1 domain. Cystine bridges form between cysteine 30/cysteine 45, cysteine 39/cysteine 51, cysteine 44/cysteine 58, cysteine 62/cysteine 66, cysteine 97/cysteine 159, cysteine 170/cysteine 178, and cysteine 277/cysteine 309. The Proton donor role is filled by glutamate 141. A propeptide spans 318-328 (SLLLSDLVTSQ) (removed in mature form).

It belongs to the glycosyl hydrolase 19 family. Chitinase class I subfamily.

Its subcellular location is the vacuole. It carries out the reaction Random endo-hydrolysis of N-acetyl-beta-D-glucosaminide (1-&gt;4)-beta-linkages in chitin and chitodextrins.. Functionally, defense against chitin-containing fungal pathogens. In Phaseolus vulgaris (Kidney bean), this protein is Endochitinase.